We begin with the raw amino-acid sequence, 501 residues long: Lysine--tRNA ligase (501 aa).

2 residues coordinate Mg(2+): glutamate 402 and glutamate 409.

Belongs to the class-II aminoacyl-tRNA synthetase family. In terms of assembly, homodimer. Mg(2+) serves as cofactor.

The protein localises to the cytoplasm. The catalysed reaction is tRNA(Lys) + L-lysine + ATP = L-lysyl-tRNA(Lys) + AMP + diphosphate. The sequence is that of Lysine--tRNA ligase from Helicobacter pylori (strain G27).